Consider the following 50-residue polypeptide: Ribosome-inactivating protein lyophyllin (50 aa).

The enzyme catalyses Endohydrolysis of the N-glycosidic bond at one specific adenosine on the 28S rRNA.. Its function is as follows. N-glycosylase that inhibits protein synthesis by depurinating ribosomal rRNA, and thus acts as a ribosomal inactivating protein (RIP). Has adenine polynucleotide glycosidase activity on the poly(A) substrate A30-ssDNA. Inhibits cell-free translation in rabbit reticulocyte lysate system with an IC(50) of 1 nM. May function in the defense response to pathogens. Displays antifungal activity against C.comatus and P.piricola, but not against R.solani, M.arachidicola and C.gossypii. Inhibits mycelial growth in P.piricola with an IC(50) of 2.5 uM. Has cytotoxic activity against the human cancer cell lines Hela, HepG2, and JAR, with IC(50) of 358.8, 489.8, and 926.9 nM respectively. It also inhibits HIV-1 reverse transcriptase activity (IC(50)=7.9 nM) and disrupts mouse embryonic development. In Lyophyllum shimeji (Hon-shimeji), this protein is Ribosome-inactivating protein lyophyllin.